Here is a 116-residue protein sequence, read N- to C-terminus: Large ribosomal subunit protein bL20 (116 aa).

This sequence belongs to the bacterial ribosomal protein bL20 family.

Functionally, binds directly to 23S ribosomal RNA and is necessary for the in vitro assembly process of the 50S ribosomal subunit. It is not involved in the protein synthesizing functions of that subunit. The chain is Large ribosomal subunit protein bL20 from Desulforapulum autotrophicum (strain ATCC 43914 / DSM 3382 / VKM B-1955 / HRM2) (Desulfobacterium autotrophicum).